The sequence spans 275 residues: Ciliary microtubule inner protein 2B (275 aa).

Disordered regions lie at residues 62–84 and 125–169; these read PPIR…RGQE and EKQG…SPYS. Basic and acidic residues-rich tracts occupy residues 71 to 84 and 125 to 147; these read EVPR…RGQE and EKQG…KDQV.

The protein belongs to the CIMIP2 family. In terms of assembly, microtubule inner protein component of sperm flagellar doublet microtubules. In terms of tissue distribution, expressed in airway epithelial cells.

The protein resides in the cytoplasm. It localises to the cytoskeleton. It is found in the cilium axoneme. The protein localises to the flagellum axoneme. Microtubule inner protein (MIP) part of the dynein-decorated doublet microtubules (DMTs) in cilia axoneme, which is required for motile cilia beating. The chain is Ciliary microtubule inner protein 2B from Homo sapiens (Human).